Consider the following 384-residue polypeptide: PqqA peptide cyclase (384 aa).

In terms of domain architecture, Radical SAM core spans 14 to 226 (IPAPVGLLAE…IRIVEAARER (213 aa)). Residues cysteine 28, cysteine 32, and cysteine 35 each coordinate [4Fe-4S] cluster.

This sequence belongs to the radical SAM superfamily. PqqE family. In terms of assembly, interacts with PqqD. The interaction is necessary for activity of PqqE. The cofactor is [4Fe-4S] cluster.

It carries out the reaction [PQQ precursor protein] + S-adenosyl-L-methionine = E-Y cross-linked-[PQQ precursor protein] + 5'-deoxyadenosine + L-methionine + H(+). It participates in cofactor biosynthesis; pyrroloquinoline quinone biosynthesis. In terms of biological role, catalyzes the cross-linking of a glutamate residue and a tyrosine residue in the PqqA protein as part of the biosynthesis of pyrroloquinoline quinone (PQQ). This is PqqA peptide cyclase from Methylorubrum populi (strain ATCC BAA-705 / NCIMB 13946 / BJ001) (Methylobacterium populi).